Here is an 829-residue protein sequence, read N- to C-terminus: E3 ubiquitin-protein ligase Jade-2 (829 aa).

The segment at 1–52 (MEEKRRKYSISSDNSDTTDGHVTSTSASRCSKLPSSTKSGWPRQNEKKPSEV) is disordered. 2 positions are modified to phosphoserine: Ser-9 and Ser-15. A compositionally biased stretch (polar residues) spans 9–39 (SISSDNSDTTDGHVTSTSASRCSKLPSSTKS). Residues Lys-32 and Lys-38 each carry the N6-acetyllysine modification. At Ser-117 the chain carries Phosphoserine. A PHD-type 1 zinc finger spans residues 199 to 249 (DVVCDVCRSPEGEDGNEMVFCDKCNVCVHQACYGILKVPTGSWLCRTCALG). A C2HC pre-PHD-type zinc finger spans residues 251–285 (QPKCLLCPKRGGALKPTRSGTKWVHVSCALWIPEV). Lys-298 carries the N6-acetyllysine modification. A PHD-type 2 zinc finger spans residues 309–365 (LSCSLCKECTGTCIQCSMPSCITAFHVTCAFDRGLEMRTILADNDEVKFKSLCQEHS). Disordered stretches follow at residues 362–383 (QEHS…PSQA), 517–555 (REPS…AGPE), and 622–817 (SFMR…REAG). The segment covering 522–535 (RRSKGKKNDSKRKG) has biased composition (basic residues). Positions 536-552 (REGPKGSSPEKKEKVKA) are enriched in basic and acidic residues. The segment covering 637–650 (KARGRTRLPAKKKP) has biased composition (basic residues). The span at 776 to 786 (ERPKVSLHFDT) shows a compositional bias: basic and acidic residues. A compositionally biased stretch (acidic residues) spans 792-806 (FSDEEMSDSEVEAED).

Belongs to the JADE family. In terms of assembly, component of the HBO1 complex composed at least of ING4 or ING5, MYST2/HBO1, MEAF6, and one of JADE1, JADE2 and JADE3. Interacts (via C-terminus) with KDM1A (via AOD/Tower domain).

The enzyme catalyses S-ubiquitinyl-[E2 ubiquitin-conjugating enzyme]-L-cysteine + [acceptor protein]-L-lysine = [E2 ubiquitin-conjugating enzyme]-L-cysteine + N(6)-ubiquitinyl-[acceptor protein]-L-lysine.. Its pathway is protein modification; protein ubiquitination. Scaffold subunit of some HBO1 complexes, which have a histone H4 acetyltransferase activity. Acts as a E3 ubiquitin-protein ligase mediating the ubiquitination and subsequent proteasomal degradation of target protein histone demethylase KDM1A. Also acts as a ubiquitin ligase E3 toward itself. Positive regulator of neurogenesis. The chain is E3 ubiquitin-protein ligase Jade-2 (Jade2) from Mus musculus (Mouse).